The sequence spans 143 residues: UPF0201 protein Msed_1787 (143 aa).

It belongs to the UPF0201 family.

This is UPF0201 protein Msed_1787 from Metallosphaera sedula (strain ATCC 51363 / DSM 5348 / JCM 9185 / NBRC 15509 / TH2).